The following is a 1169-amino-acid chain: Chromosome partition protein Smc (1169 aa).

32–39 (PNGCGKSN) contributes to the ATP binding site. Coiled coils occupy residues 170–265 (ISKY…TGEE) and 307–481 (IRHT…ERLN). The region spanning 525-620 (DRLGEKIEVA…CASDPAEAAE (96 aa)) is the SMC hinge domain. Coiled coils occupy residues 656-914 (ALAR…MKLA) and 985-1014 (RYLEEQDRDLTESLATLEQAIEKIDRECRA).

This sequence belongs to the SMC family. Homodimer.

The protein localises to the cytoplasm. Functionally, required for chromosome condensation and partitioning. The chain is Chromosome partition protein Smc from Methylococcus capsulatus (strain ATCC 33009 / NCIMB 11132 / Bath).